Consider the following 391-residue polypeptide: Extracellular metalloproteinase 3 (391 aa).

Positions H1 to S9 are excised as a propeptide. N173 carries an N-linked (GlcNAc...) asparagine glycan. H192 is a binding site for Zn(2+). E193 is a catalytic residue. Residue H196 coordinates Zn(2+). Residues N243 and N385 are each glycosylated (N-linked (GlcNAc...) asparagine).

This sequence belongs to the peptidase M36 family. It depends on Zn(2+) as a cofactor.

The protein localises to the secreted. Its function is as follows. Secreted metalloproteinase probably acting as a virulence factor. The sequence is that of Extracellular metalloproteinase 3 (MEP3) from Trichophyton soudanense.